The primary structure comprises 340 residues: Annexin A2-B (340 aa).

A P10 binding site region spans residues 2–25; sequence ALIHEILGKLSLEGNQSSSRQSKL. S27 is modified (phosphoserine; by PKC). Annexin repeat units follow at residues 34–105, 106–177, 190–262, and 266–337; these read FDAE…GLIK, TRPQ…ALAK, EKID…NLVQ, and NKPL…NLCG.

It belongs to the annexin family. In terms of assembly, tetramer of 2 light chains (p10 proteins) and 2 heavy chains (p36 proteins). In terms of tissue distribution, adult brain, heart, striated muscle, liver, kidney, and very high levels in skin.

Its subcellular location is the secreted. It is found in the extracellular space. The protein localises to the extracellular matrix. The protein resides in the basement membrane. Its function is as follows. Calcium-regulated membrane-binding protein whose affinity for calcium is greatly enhanced by anionic phospholipids. It binds two calcium ions with high affinity. The chain is Annexin A2-B (anxa2-b) from Xenopus laevis (African clawed frog).